Here is a 612-residue protein sequence, read N- to C-terminus: Dihydroxy-acid dehydratase (612 aa).

A Mg(2+)-binding site is contributed by Asp81. Cys122 is a [2Fe-2S] cluster binding site. Mg(2+) is bound by residues Asp123 and Lys124. Lys124 bears the N6-carboxylysine mark. Position 193 (Cys193) interacts with [2Fe-2S] cluster. Residue Glu489 participates in Mg(2+) binding. The Proton acceptor role is filled by Ser515.

This sequence belongs to the IlvD/Edd family. Homodimer. Requires [2Fe-2S] cluster as cofactor. The cofactor is Mg(2+).

The catalysed reaction is (2R)-2,3-dihydroxy-3-methylbutanoate = 3-methyl-2-oxobutanoate + H2O. It carries out the reaction (2R,3R)-2,3-dihydroxy-3-methylpentanoate = (S)-3-methyl-2-oxopentanoate + H2O. The protein operates within amino-acid biosynthesis; L-isoleucine biosynthesis; L-isoleucine from 2-oxobutanoate: step 3/4. Its pathway is amino-acid biosynthesis; L-valine biosynthesis; L-valine from pyruvate: step 3/4. Functions in the biosynthesis of branched-chain amino acids. Catalyzes the dehydration of (2R,3R)-2,3-dihydroxy-3-methylpentanoate (2,3-dihydroxy-3-methylvalerate) into 2-oxo-3-methylpentanoate (2-oxo-3-methylvalerate) and of (2R)-2,3-dihydroxy-3-methylbutanoate (2,3-dihydroxyisovalerate) into 2-oxo-3-methylbutanoate (2-oxoisovalerate), the penultimate precursor to L-isoleucine and L-valine, respectively. The chain is Dihydroxy-acid dehydratase from Azotobacter vinelandii (strain DJ / ATCC BAA-1303).